Here is a 299-residue protein sequence, read N- to C-terminus: MKTKLIVVAGPTAVGKTALGIELAERFNGEIISGDSQQVYRQLNIGTAKATPEEQAAAVHHLIDVRDVDESYSAYDFVTEAQAAITDIVSRGKLPIIVGGTGLYLQSLLEGYHLGGQVDQNQVLAYRSELEQLSDQQLFEKIDSLGIEIKEINRRRAIRALELYRFSDNLENTETCYEPFIIGLDDERSLIYDRINTRVDKMVELGLLEEAKWLYDNFSEAQSARGIGYKELFPYFSGEQTLDEALEKLKQNTRRFAKRQLTWFRNRMTVSFYQISSPEYPENVIQDLAIFLNEEEGEK.

Residue Gly10 to Thr17 participates in ATP binding. Thr12 to Thr17 contributes to the substrate binding site. The interaction with substrate tRNA stretch occupies residues Asp35 to Gln38.

The protein belongs to the IPP transferase family. Monomer. The cofactor is Mg(2+).

The catalysed reaction is adenosine(37) in tRNA + dimethylallyl diphosphate = N(6)-dimethylallyladenosine(37) in tRNA + diphosphate. Functionally, catalyzes the transfer of a dimethylallyl group onto the adenine at position 37 in tRNAs that read codons beginning with uridine, leading to the formation of N6-(dimethylallyl)adenosine (i(6)A). The sequence is that of tRNA dimethylallyltransferase from Streptococcus thermophilus (strain ATCC BAA-491 / LMD-9).